The chain runs to 363 residues: AA9 family lytic polysaccharide monooxygenase I (363 aa).

Residues 1 to 19 (MSLFKFAAFVLGTAGSVAG) form the signal peptide. The Cu(2+) site is built by H20 and H105. Intrachain disulfides connect C75-C197 and C116-C120. Residues H183 and Q192 each coordinate O2. A Cu(2+)-binding site is contributed by Y194. Residues 248 to 257 (GSDSNTATSG) are compositionally biased toward polar residues. Disordered regions lie at residues 248–270 (GSDS…PTTT) and 298–363 (SVSY…RTQS). The segment covering 258–270 (ASPPSTNFSPTTT) has biased composition (low complexity). A compositionally biased stretch (polar residues) spans 298-307 (SVSYSQTPWP). Positions 308–329 (SSTATEATSASSSAGGSNNGHT) are enriched in low complexity. The span at 342–354 (TGKKRSRLNRRRM) shows a compositional bias: basic residues.

The protein belongs to the polysaccharide monooxygenase AA9 family. Requires Cu(2+) as cofactor.

The protein resides in the secreted. It carries out the reaction [(1-&gt;4)-beta-D-glucosyl]n+m + reduced acceptor + O2 = 4-dehydro-beta-D-glucosyl-[(1-&gt;4)-beta-D-glucosyl]n-1 + [(1-&gt;4)-beta-D-glucosyl]m + acceptor + H2O.. Functionally, lytic polysaccharide monooxygenase (LPMO) that depolymerizes crystalline and amorphous polysaccharides via the oxidation of scissile alpha- or beta-(1-4)-glycosidic bonds, yielding C1 or C4 oxidation products. Catalysis by LPMOs requires the reduction of the active-site copper from Cu(II) to Cu(I) by a reducing agent and H(2)O(2) or O(2) as a cosubstrate. The polypeptide is AA9 family lytic polysaccharide monooxygenase I (Emericella nidulans (strain FGSC A4 / ATCC 38163 / CBS 112.46 / NRRL 194 / M139) (Aspergillus nidulans)).